The chain runs to 244 residues: Ureidoacrylate amidohydrolase RutB (244 aa).

Catalysis depends on Asp-38, which acts as the Proton acceptor. Lys-147 is a catalytic residue. The active-site Nucleophile is Cys-180.

Belongs to the isochorismatase family. RutB subfamily.

The catalysed reaction is (Z)-3-ureidoacrylate + H2O + H(+) = (Z)-3-aminoacrylate + NH4(+) + CO2. The enzyme catalyses (Z)-3-ureidoacrylate + H2O = (Z)-3-aminoacrylate + carbamate + H(+). It catalyses the reaction (Z)-2-methylureidoacrylate + H2O + H(+) = (Z)-2-methylaminoacrylate + NH4(+) + CO2. Hydrolyzes ureidoacrylate to form aminoacrylate and carbamate. The carbamate hydrolyzes spontaneously, thereby releasing one of the nitrogen atoms of the pyrimidine ring as ammonia and one of its carbon atoms as CO2. This chain is Ureidoacrylate amidohydrolase RutB, found in Escherichia coli O55:H7 (strain CB9615 / EPEC).